A 241-amino-acid polypeptide reads, in one-letter code: Major prion protein (241 aa).

A signal peptide spans 1–15 (MLVLFVATWSDLGLC). Residues 16–31 (KKRPKPGGWNTGGSRY) are interaction with ADGRG6. The interval 16–223 (KKRPKPGGWN…ESQAYYQRGS (208 aa)) is interaction with GRB2, ERI3 and SYN1. Residues 18-100 (RPKPGGWNTG…QWNKPSKPKT (83 aa)) form a disordered region. A run of 5 repeats spans residues 44-52 (PQGGGSWGQ), 53-60 (PHGGGWGQ), 61-68 (PHGGGWGQ), 69-76 (PHGGGWGQ), and 77-84 (PHGGGWGQ). Residues 44–84 (PQGGGSWGQPHGGGWGQPHGGGWGQPHGGGWGQPHGGGWGQ) are 5 X 8 AA tandem repeats of P-H-G-G-G-W-G-Q. Positions 45–88 (QGGGSWGQPHGGGWGQPHGGGWGQPHGGGWGQPHGGGWGQGGGT) are enriched in gly residues. Positions 54, 55, 56, 62, 63, 64, 70, 71, 72, 78, 79, and 80 each coordinate Cu(2+). C172 and C207 are disulfide-bonded. Residues N174 and N190 are each glycosylated (N-linked (GlcNAc...) asparagine). S223 is lipidated: GPI-anchor amidated serine. A propeptide spans 224–241 (SMVLFSSPPVILLISFLI) (removed in mature form).

It belongs to the prion family. As to quaternary structure, monomer and homodimer. Has a tendency to aggregate into amyloid fibrils containing a cross-beta spine, formed by a steric zipper of superposed beta-strands. Soluble oligomers may represent an intermediate stage on the path to fibril formation. Copper binding may promote oligomerization. Interacts with GRB2, APP, ERI3/PRNPIP and SYN1. Mislocalized cytosolically exposed PrP interacts with MGRN1; this interaction alters MGRN1 subcellular location and causes lysosomal enlargement. Interacts with APP. Interacts with KIAA1191. Interacts with ADGRG6.

Its subcellular location is the cell membrane. It localises to the golgi apparatus. Its function is as follows. Its primary physiological function is unclear. May play a role in neuronal development and synaptic plasticity. May be required for neuronal myelin sheath maintenance. May promote myelin homeostasis through acting as an agonist for ADGRG6 receptor. May play a role in iron uptake and iron homeostasis. Soluble oligomers are toxic to cultured neuroblastoma cells and induce apoptosis (in vitro). Association with GPC1 (via its heparan sulfate chains) targets PRNP to lipid rafts. Also provides Cu(2+) or Zn(2+) for the ascorbate-mediated GPC1 deaminase degradation of its heparan sulfate side chains. The protein is Major prion protein (PRNP) of Plecturocebus moloch (Dusky titi monkey).